Consider the following 353-residue polypeptide: ATP-dependent kinase YFH7 (353 aa).

An ATP-binding site is contributed by 31–39 (GPPGSGKST).

It belongs to the YFH7 family.

Functionally, ATP-dependent kinase that could be involved in endoplasmic reticulum membrane assembly. This chain is ATP-dependent kinase YFH7 (YFH7), found in Kluyveromyces lactis (strain ATCC 8585 / CBS 2359 / DSM 70799 / NBRC 1267 / NRRL Y-1140 / WM37) (Yeast).